The chain runs to 50 residues: MVILLHKFQLDELIYIVLAQGYHQIPEYVRFQFPLYAHKDIHLYMKKLVL.

Its function is as follows. Involved in T4 DNA replication. Binds to ssDNA. In Enterobacteria phage T4 (Bacteriophage T4), this protein is DNA replication protein repEA (repEA).